Here is a 247-residue protein sequence, read N- to C-terminus: PsbP domain-containing protein 3, chloroplastic (247 aa).

The transit peptide at Met1–Arg26 directs the protein to the chloroplast. The transit peptide at Cys27–Ala80 directs the protein to the thylakoid.

This sequence belongs to the PsbP family.

The protein localises to the plastid. It localises to the chloroplast thylakoid lumen. The chain is PsbP domain-containing protein 3, chloroplastic (PPD3) from Arabidopsis thaliana (Mouse-ear cress).